Reading from the N-terminus, the 407-residue chain is Peptidase T (407 aa).

Residue His-78 coordinates Zn(2+). Residue Asp-80 is part of the active site. A Zn(2+)-binding site is contributed by Asp-141. Glu-175 functions as the Proton acceptor in the catalytic mechanism. 3 residues coordinate Zn(2+): Glu-176, Asp-198, and His-380.

The protein belongs to the peptidase M20B family. Zn(2+) is required as a cofactor.

It is found in the cytoplasm. It catalyses the reaction Release of the N-terminal residue from a tripeptide.. Cleaves the N-terminal amino acid of tripeptides. The polypeptide is Peptidase T (Clostridium novyi (strain NT)).